The sequence spans 307 residues: Porphobilinogen deaminase (307 aa).

Residue cysteine 241 is modified to S-(dipyrrolylmethanemethyl)cysteine.

This sequence belongs to the HMBS family. Monomer. Dipyrromethane is required as a cofactor.

The enzyme catalyses 4 porphobilinogen + H2O = hydroxymethylbilane + 4 NH4(+). It functions in the pathway porphyrin-containing compound metabolism; protoporphyrin-IX biosynthesis; coproporphyrinogen-III from 5-aminolevulinate: step 2/4. In terms of biological role, tetrapolymerization of the monopyrrole PBG into the hydroxymethylbilane pre-uroporphyrinogen in several discrete steps. The protein is Porphobilinogen deaminase of Coxiella burnetii (strain RSA 331 / Henzerling II).